The following is a 279-amino-acid chain: PHO85 cyclin-1 (279 aa).

In terms of domain architecture, Cyclin N-terminal spans 19-152 (DIIKFLTDTT…LLQLLNWDLR (134 aa)). The interval 29–36 (LRVVPSSN) is required for degradation by DMA1. A Phosphothreonine; by PHO85 modification is found at threonine 39. Serine 43 carries the phosphoserine; by PHO85 modification. Glycyl lysine isopeptide (Lys-Gly) (interchain with G-Cter in ubiquitin) cross-links involve residues lysine 82 and lysine 121.

The protein belongs to the cyclin family. PCL1,2 subfamily. As to quaternary structure, forms a cyclin-CDK complex with PHO85. Interacts with HMS1, NCP1 and NPA3. Interacts with DMA1. In terms of processing, phosphorylated by PHO85; necessary for interaction with DMA1 and subsequent degradation. Post-translationally, ubiquitinated by E3 ubiquitin ligase DMA1 in response to nutrient condition; this targets PCL1 for destruction.

It localises to the cytoplasm. The protein resides in the nucleus. G1/S-specific cyclin partner of the cyclin-dependent kinase (CDK) PHO85. Essential for the control of the cell cycle at the G1/S (start) transition. The PCL1-PHO85 cyclin-CDK holoenzyme is involved in phosphorylation of the CDK inhibitor (CKI) SIC1, which is required for its ubiquitination and degradation, releasing repression of b-type cyclins and promoting exit from mitosis. Together with cyclin PCL2, positively controls degradation of sphingoid long chain base kinase LCB4. PCL1-PHO85 phosphorylates LCB4, which is required for its ubiquitination and degradation. PCL1-PHO85 also phosphorylates HMS1, NCP1 and NPA3, which may all have a role in mitotic exit. The polypeptide is PHO85 cyclin-1 (Saccharomyces cerevisiae (strain ATCC 204508 / S288c) (Baker's yeast)).